A 537-amino-acid chain; its full sequence is Interleukin-2 receptor subunit beta (537 aa).

An N-terminal signal peptide occupies residues 1 to 26 (MATVDLSWRLPLYILLLLLATTWVSA). Residues 27-239 (AVNDCSHLKC…FRTRPADPKE (213 aa)) are Extracellular-facing. Cys36 and Cys46 form a disulfide bridge. N-linked (GlcNAc...) asparagine glycans are attached at residues Asn43, Asn55, and Asn71. Cys74 and Cys86 form a disulfide bridge. In terms of domain architecture, Fibronectin type-III spans 135–235 (APHSLQVLHI…QPMAFRTRPA (101 aa)). N-linked (GlcNAc...) asparagine glycosylation is present at Asn150. A WSXWS motif motif is present at residues 221 to 225 (WSPWS). Residues 240 to 267 (IFPLPWLRCLLLVLGCFFGFLSCVCVLV) form a helical membrane-spanning segment. Over 268–537 (KCRYLGPWLK…LQAQDSAHLI (270 aa)) the chain is Cytoplasmic. The short motif at 280-288 (LKCHIPDPS) is the Box 1 motif element. Disordered stretches follow at residues 442–466 (AYGN…SLAS) and 479–498 (ELGD…QASV). Residues 487 to 497 (MSTNSSGQQAS) are compositionally biased toward polar residues.

It belongs to the type I cytokine receptor family. Type 4 subfamily. In terms of assembly, non-covalent dimer of an alpha and a beta subunit. IL2R exists in 3 different forms: a high affinity dimer, an intermediate affinity monomer (beta subunit), and a low affinity monomer (alpha subunit). The high and intermediate affinity forms also associate with a gamma subunit. Interacts with SHB upon interleukin stimulation.

It is found in the cell membrane. The protein localises to the cell surface. Functionally, receptor for interleukin-2. This beta subunit is involved in receptor mediated endocytosis and transduces the mitogenic signals of IL2. Probably in association with IL15RA, involved in the stimulation of neutrophil phagocytosis by IL15. This Rattus norvegicus (Rat) protein is Interleukin-2 receptor subunit beta (Il2rb).